Consider the following 162-residue polypeptide: Putative ripening-related protein 7 (162 aa).

Residues 1–30 (MAAAAASTKIVAVVVAVLLAILEMPSCAVA) form the signal peptide.

This sequence belongs to the kiwellin family.

The protein resides in the secreted. This is Putative ripening-related protein 7 from Oryza sativa subsp. japonica (Rice).